Here is a 557-residue protein sequence, read N- to C-terminus: Inositol-3-phosphate synthase 1 (557 aa).

The NAD(+) site is built by G67, G68, N69, N70, D141, S177, V178, Q188, R191, T228, A229, N230, T231, G278, S279, D303, S306, N337, N338, D339, and K352. S279 is subject to Phosphoserine. Position 357 is a phosphoserine (S357). G390, D391, D419, and S420 together coordinate NAD(+). The residue at position 523 (S523) is a Phosphoserine. The segment at 527–557 is disordered; sequence CKKGSAPTAPNGCTGDANGHSQAEAPQMPTT.

Belongs to the myo-inositol 1-phosphate synthase family. NAD(+) is required as a cofactor. Expressed in testis (at protein level).

Its subcellular location is the cytoplasm. It carries out the reaction D-glucose 6-phosphate = 1D-myo-inositol 3-phosphate. It functions in the pathway polyol metabolism; myo-inositol biosynthesis; myo-inositol from D-glucose 6-phosphate: step 1/2. Its function is as follows. Key enzyme in myo-inositol biosynthesis pathway that catalyzes the conversion of glucose 6-phosphate to 1-myo-inositol 1-phosphate in a NAD-dependent manner. Rate-limiting enzyme in the synthesis of all inositol-containing compounds. In Bos taurus (Bovine), this protein is Inositol-3-phosphate synthase 1 (ISYNA1).